A 331-amino-acid chain; its full sequence is Nucleotide-binding protein SGR_5570 (331 aa).

Positions 1–43 are disordered; it reads MTENTHETAPNTADTDTADFDTADTDRADGAADVSTNTPNETG. 55 to 62 lines the ATP pocket; that stretch reads GMSGAGRS. 106-109 lines the GTP pocket; sequence DVRG.

This sequence belongs to the RapZ-like family.

Its function is as follows. Displays ATPase and GTPase activities. The polypeptide is Nucleotide-binding protein SGR_5570 (Streptomyces griseus subsp. griseus (strain JCM 4626 / CBS 651.72 / NBRC 13350 / KCC S-0626 / ISP 5235)).